A 376-amino-acid polypeptide reads, in one-letter code: Chaperone protein DnaJ (376 aa).

The J domain occupies 5 to 70 (DYYEVLGVAR…NKRRAYDAHG (66 aa)). A CR-type zinc finger spans residues 132–209 (GIERRIEIPT…CHGAGRVEEN (78 aa)). The Zn(2+) site is built by Cys145, Cys148, Cys161, Cys164, Cys183, Cys186, Cys197, and Cys200. 4 CXXCXGXG motif repeats span residues 145 to 152 (CVSCHGSG), 161 to 168 (CGTCHGRG), 183 to 190 (CPHCDGRG), and 197 to 204 (CKTCHGAG).

The protein belongs to the DnaJ family. As to quaternary structure, homodimer. It depends on Zn(2+) as a cofactor.

It localises to the cytoplasm. Participates actively in the response to hyperosmotic and heat shock by preventing the aggregation of stress-denatured proteins and by disaggregating proteins, also in an autonomous, DnaK-independent fashion. Unfolded proteins bind initially to DnaJ; upon interaction with the DnaJ-bound protein, DnaK hydrolyzes its bound ATP, resulting in the formation of a stable complex. GrpE releases ADP from DnaK; ATP binding to DnaK triggers the release of the substrate protein, thus completing the reaction cycle. Several rounds of ATP-dependent interactions between DnaJ, DnaK and GrpE are required for fully efficient folding. Also involved, together with DnaK and GrpE, in the DNA replication of plasmids through activation of initiation proteins. The sequence is that of Chaperone protein DnaJ from Xanthomonas oryzae pv. oryzae (strain PXO99A).